The sequence spans 270 residues: Bis(5'-nucleosyl)-tetraphosphatase, symmetrical (270 aa).

The protein belongs to the Ap4A hydrolase family.

The catalysed reaction is P(1),P(4)-bis(5'-adenosyl) tetraphosphate + H2O = 2 ADP + 2 H(+). Hydrolyzes diadenosine 5',5'''-P1,P4-tetraphosphate to yield ADP. This is Bis(5'-nucleosyl)-tetraphosphatase, symmetrical from Haemophilus ducreyi (strain 35000HP / ATCC 700724).